A 257-amino-acid chain; its full sequence is NAD kinase (257 aa).

Aspartate 46 serves as the catalytic Proton acceptor. Residues 46–47 (DG), histidine 51, 116–117 (NE), aspartate 146, alanine 154, 157–162 (TAYNLS), and glutamine 218 each bind NAD(+).

It belongs to the NAD kinase family. A divalent metal cation serves as cofactor.

The protein resides in the cytoplasm. It catalyses the reaction NAD(+) + ATP = ADP + NADP(+) + H(+). Its function is as follows. Involved in the regulation of the intracellular balance of NAD and NADP, and is a key enzyme in the biosynthesis of NADP. Catalyzes specifically the phosphorylation on 2'-hydroxyl of the adenosine moiety of NAD to yield NADP. This Rhizobium meliloti (strain 1021) (Ensifer meliloti) protein is NAD kinase.